A 303-amino-acid chain; its full sequence is UDP-3-O-acyl-N-acetylglucosamine deacetylase (303 aa).

Positions 78, 237, and 241 each coordinate Zn(2+). His-264 acts as the Proton donor in catalysis.

This sequence belongs to the LpxC family. Zn(2+) is required as a cofactor.

It catalyses the reaction a UDP-3-O-[(3R)-3-hydroxyacyl]-N-acetyl-alpha-D-glucosamine + H2O = a UDP-3-O-[(3R)-3-hydroxyacyl]-alpha-D-glucosamine + acetate. Its pathway is glycolipid biosynthesis; lipid IV(A) biosynthesis; lipid IV(A) from (3R)-3-hydroxytetradecanoyl-[acyl-carrier-protein] and UDP-N-acetyl-alpha-D-glucosamine: step 2/6. Catalyzes the hydrolysis of UDP-3-O-myristoyl-N-acetylglucosamine to form UDP-3-O-myristoylglucosamine and acetate, the committed step in lipid A biosynthesis. The sequence is that of UDP-3-O-acyl-N-acetylglucosamine deacetylase from Pseudomonas entomophila (strain L48).